The following is a 353-amino-acid chain: ATPase GET3 (353 aa).

26-33 (KGGVGKTT) is an ATP binding site. Residue Asp-57 is part of the active site. Positions 244 and 271 each coordinate ATP. Zn(2+)-binding residues include Cys-284 and Cys-287.

Belongs to the arsA ATPase family. In terms of assembly, homodimer. Component of the Golgi to ER traffic (GET) complex, which is composed of GET1, GET2 and GET3. Within the complex, GET1 and GET2 form a heterotetramer which is stabilized by phosphatidylinositol binding and which binds to the GET3 homodimer. Interacts with the chloride channel protein GEF1.

The protein resides in the cytoplasm. It is found in the endoplasmic reticulum. It localises to the golgi apparatus. Its function is as follows. ATPase required for the post-translational delivery of tail-anchored (TA) proteins to the endoplasmic reticulum. Recognizes and selectively binds the transmembrane domain of TA proteins in the cytosol. This complex then targets to the endoplasmic reticulum by membrane-bound receptors GET1 and GET2, where the tail-anchored protein is released for insertion. This process is regulated by ATP binding and hydrolysis. ATP binding drives the homodimer towards the closed dimer state, facilitating recognition of newly synthesized TA membrane proteins. ATP hydrolysis is required for insertion. Subsequently, the homodimer reverts towards the open dimer state, lowering its affinity for the GET1-GET2 receptor, and returning it to the cytosol to initiate a new round of targeting. Cooperates with the HDEL receptor ERD2 to mediate the ATP-dependent retrieval of resident ER proteins that contain a C-terminal H-D-E-L retention signal from the Golgi to the ER. Involved in low-level resistance to the oxyanions arsenite and arsenate, and in heat tolerance. This chain is ATPase GET3, found in Zygosaccharomyces rouxii (strain ATCC 2623 / CBS 732 / NBRC 1130 / NCYC 568 / NRRL Y-229).